A 338-amino-acid chain; its full sequence is Ketol-acid reductoisomerase (NADP(+)) (338 aa).

The 181-residue stretch at 1–181 (MQIFYDKDCD…GGGRTGIIET (181 aa)) folds into the KARI N-terminal Rossmann domain. NADP(+) is bound by residues 24–27 (YGSQ), Arg-47, Ser-50, Ser-52, and 82–85 (DEFQ). His-107 is an active-site residue. Residue Gly-133 coordinates NADP(+). A KARI C-terminal knotted domain is found at 182–327 (SFREETETDL…SKLRAMMPWI (146 aa)). The Mg(2+) site is built by Asp-190, Glu-194, Glu-226, and Glu-230. Position 251 (Ser-251) interacts with substrate.

Belongs to the ketol-acid reductoisomerase family. It depends on Mg(2+) as a cofactor.

It carries out the reaction (2R)-2,3-dihydroxy-3-methylbutanoate + NADP(+) = (2S)-2-acetolactate + NADPH + H(+). The catalysed reaction is (2R,3R)-2,3-dihydroxy-3-methylpentanoate + NADP(+) = (S)-2-ethyl-2-hydroxy-3-oxobutanoate + NADPH + H(+). It participates in amino-acid biosynthesis; L-isoleucine biosynthesis; L-isoleucine from 2-oxobutanoate: step 2/4. The protein operates within amino-acid biosynthesis; L-valine biosynthesis; L-valine from pyruvate: step 2/4. Involved in the biosynthesis of branched-chain amino acids (BCAA). Catalyzes an alkyl-migration followed by a ketol-acid reduction of (S)-2-acetolactate (S2AL) to yield (R)-2,3-dihydroxy-isovalerate. In the isomerase reaction, S2AL is rearranged via a Mg-dependent methyl migration to produce 3-hydroxy-3-methyl-2-ketobutyrate (HMKB). In the reductase reaction, this 2-ketoacid undergoes a metal-dependent reduction by NADPH to yield (R)-2,3-dihydroxy-isovalerate. In Acinetobacter baylyi (strain ATCC 33305 / BD413 / ADP1), this protein is Ketol-acid reductoisomerase (NADP(+)).